An 80-amino-acid chain; its full sequence is Small ribosomal subunit protein uS17 (80 aa).

Belongs to the universal ribosomal protein uS17 family. Part of the 30S ribosomal subunit.

One of the primary rRNA binding proteins, it binds specifically to the 5'-end of 16S ribosomal RNA. This Cereibacter sphaeroides (strain ATCC 17029 / ATH 2.4.9) (Rhodobacter sphaeroides) protein is Small ribosomal subunit protein uS17.